We begin with the raw amino-acid sequence, 666 residues long: Probable potassium transport system protein Kup (666 aa).

Helical transmembrane passes span 16–36 (GFII…LYTM), 58–78 (ISLI…LIAL), 100–120 (PWLI…GALT), 141–161 (IYQN…VLFG), 165–185 (FGTG…FSFL), 221–241 (IFIL…YSDL), 253–273 (WPFV…WILA), 292–312 (LTVY…QALI), 343–363 (LYIP…VLYF), 373–393 (YGLA…YYLI), 399–419 (PFLA…FFWA), and 424–444 (FMHG…VMFI).

It belongs to the HAK/KUP transporter (TC 2.A.72) family.

The protein resides in the cell membrane. The catalysed reaction is K(+)(in) + H(+)(in) = K(+)(out) + H(+)(out). Transport of potassium into the cell. Likely operates as a K(+):H(+) symporter. This chain is Probable potassium transport system protein Kup, found in Streptococcus pyogenes serotype M18 (strain MGAS8232).